Consider the following 1129-residue polypeptide: Protein TPR1 (1129 aa).

One can recognise a LisH domain in the interval 4-36; that stretch reads LSRELVFLILQFLDEEKFKETVHKLEQESGFFF. Positions 34–92 constitute a CTLH domain; it reads FFFNMKYFEEKVHAGEWDEVEKYLSGFTKVDDNRYSMKIFFEIRKQKYLEALDRHDRAK. WD repeat units lie at residues 337–377, 398–437, 443–485, 487–527, 579–618, 623–662, 762–801, 829–867, 870–910, 913–952, and 1005–1044; these read SQGS…RLFS, ESSI…ETRQ, AHSG…FSFE, HEAP…SRVD, KKSA…MLSS, GGLP…RTLR, DQAS…QNPS, NPED…VMTT, PPPP…VKTR, GHQR…KKKS, and ALSA…LRCR. Positions 1092-1129 are disordered; the sequence is LESEGKWGTTPPTENGVPNGRTSTSSATSNPAADQIQR. The span at 1113–1129 shows a compositional bias: low complexity; sequence TSTSSATSNPAADQIQR.

Tetramer. Interacts with D53. Interacts with WOX1. Interacts with MOF1. Expressed in panicles, stems, leaves, spikelets and seed endosperm.

Probable downstream regulator of strigolactones signaling. The sequence is that of Protein TPR1 from Oryza sativa subsp. japonica (Rice).